The sequence spans 545 residues: Reticulon-2 (545 aa).

2 disordered regions span residues 1-183 (MGQV…ETGE) and 199-250 (SPEV…EREP). Residues 14-25 (APSTASSTPDST) show a composition bias toward low complexity. Over residues 32 to 43 (SDFRELHTAREF) the composition is skewed to basic and acidic residues. Position 44 is a phosphoserine (Ser-44). Over residues 135–146 (RPLEDLRLRLDH) the composition is skewed to basic and acidic residues. Residues 157-166 (GEDSSTSSST) show a composition bias toward low complexity. Residues 199–230 (SPEVLTPQLSPGSGTPQAGTPSPSRSRDSNSG) show a composition bias toward polar residues. A phosphoserine mark is found at Ser-227 and Ser-229. The Reticulon domain maps to 345 to 545 (VADLLYWKDT…AVSGSKAKAE (201 aa)). Helical transmembrane passes span 368-388 (LLCL…LLLL) and 463-483 (LLFY…LLIL).

Interacts with isoform 1 but not isoform 3 of SPAST. Interacts with BACE1. Interacts (via first transmembrane domain) with ARL6IP5/GTRAP3-18. Interacts (via N-terminus) with SLC1A1/EAAC1; the interaction promotes cell surface expression of SLC1A1. In terms of assembly, interacts with TMEM33. As to expression, highly expressed in skeletal muscle.

It is found in the endoplasmic reticulum membrane. The protein resides in the sarcoplasmic reticulum membrane. Its subcellular location is the cell membrane. It localises to the sarcolemma. The protein localises to the T-tubule. It is found in the cytoplasm. The protein resides in the myofibril. Its subcellular location is the sarcomere. It localises to the z line. The protein localises to the cytoskeleton. Its function is as follows. Inhibits amyloid precursor protein processing, probably by blocking BACE1 activity. Enhances trafficking of the glutamate transporter SLC1A1/EAAC1 from the endoplasmic reticulum to the cell surface. Plays a role in the translocation of SLC2A4/GLUT4 from intracellular membranes to the cell membrane which facilitates the uptake of glucose into the cell. The polypeptide is Reticulon-2 (RTN2) (Homo sapiens (Human)).